Here is a 122-residue protein sequence, read N- to C-terminus: Serum amyloid A-2 protein (122 aa).

Residues 1 to 18 (MKPFLSIIFCFLVLGVDS) form the signal peptide. Gln19 bears the Pyrrolidone carboxylic acid mark. Positions 100–122 (ANEWGRSGKDPNFFRPPGLPSKY) are disordered.

Belongs to the SAA family. As to quaternary structure, apolipoprotein of the HDL complex. As to expression, expressed by the liver; secreted in plasma.

The protein localises to the secreted. Its function is as follows. Major acute phase reactant. The sequence is that of Serum amyloid A-2 protein (SAA2) from Mesocricetus auratus (Golden hamster).